Reading from the N-terminus, the 198-residue chain is tRNA (pseudouridine(54)-N(1))-methyltransferase (198 aa).

Residues Leu130, Gly153, 176–181 (LSPLEL), and Cys186 each bind S-adenosyl-L-methionine.

Belongs to the methyltransferase superfamily. TrmY family. Homodimer.

The protein resides in the cytoplasm. The catalysed reaction is pseudouridine(54) in tRNA + S-adenosyl-L-methionine = N(1)-methylpseudouridine(54) in tRNA + S-adenosyl-L-homocysteine + H(+). Its function is as follows. Specifically catalyzes the N1-methylation of pseudouridine at position 54 (Psi54) in tRNAs. This Methanococcus maripaludis (strain C6 / ATCC BAA-1332) protein is tRNA (pseudouridine(54)-N(1))-methyltransferase.